We begin with the raw amino-acid sequence, 430 residues long: Protein translocase subunit SecY (430 aa).

The next 10 membrane-spanning stretches (helical) occupy residues 18 to 38 (IFFT…PAPG), 68 to 88 (FSIF…MQLL), 117 to 137 (FAII…NNYL), 147 to 167 (VMSY…LIWL), 174 to 194 (FGVG…TLPS), 217 to 237 (ILGL…VLEA), 270 to 290 (VIPV…TLFF), 308 to 328 (NIGM…YAFV), 368 to 388 (FVGS…TKFM), and 389 to 409 (GLPQ…GVAI).

The protein belongs to the SecY/SEC61-alpha family. Component of the Sec protein translocase complex. Heterotrimer consisting of SecY, SecE and SecG subunits. The heterotrimers can form oligomers, although 1 heterotrimer is thought to be able to translocate proteins. Interacts with the ribosome. Interacts with SecDF, and other proteins may be involved. Interacts with SecA.

The protein localises to the cell membrane. Functionally, the central subunit of the protein translocation channel SecYEG. Consists of two halves formed by TMs 1-5 and 6-10. These two domains form a lateral gate at the front which open onto the bilayer between TMs 2 and 7, and are clamped together by SecE at the back. The channel is closed by both a pore ring composed of hydrophobic SecY resides and a short helix (helix 2A) on the extracellular side of the membrane which forms a plug. The plug probably moves laterally to allow the channel to open. The ring and the pore may move independently. The sequence is that of Protein translocase subunit SecY from Staphylococcus epidermidis (strain ATCC 35984 / DSM 28319 / BCRC 17069 / CCUG 31568 / BM 3577 / RP62A).